The primary structure comprises 161 residues: Phosphopantetheine adenylyltransferase (161 aa).

Position 9 (serine 9) interacts with substrate. ATP contacts are provided by residues 9–10 (SF) and histidine 17. Substrate contacts are provided by lysine 41, threonine 73, and arginine 87. ATP is bound by residues 88–90 (GLR), glutamate 98, and 123–129 (FAHISST).

The protein belongs to the bacterial CoaD family. As to quaternary structure, homohexamer. It depends on Mg(2+) as a cofactor.

Its subcellular location is the cytoplasm. It catalyses the reaction (R)-4'-phosphopantetheine + ATP + H(+) = 3'-dephospho-CoA + diphosphate. The protein operates within cofactor biosynthesis; coenzyme A biosynthesis; CoA from (R)-pantothenate: step 4/5. Functionally, reversibly transfers an adenylyl group from ATP to 4'-phosphopantetheine, yielding dephospho-CoA (dPCoA) and pyrophosphate. The protein is Phosphopantetheine adenylyltransferase of Chloroflexus aggregans (strain MD-66 / DSM 9485).